The sequence spans 226 residues: Putative 5'-nucleotidase alr3139 (226 aa).

Asp-8, Asp-9, Ser-38, and Asn-89 together coordinate a divalent metal cation.

This sequence belongs to the SurE nucleotidase family. A divalent metal cation serves as cofactor.

It is found in the cytoplasm. The enzyme catalyses a ribonucleoside 5'-phosphate + H2O = a ribonucleoside + phosphate. Functionally, nucleotidase that shows phosphatase activity on nucleoside 5'-monophosphates. The polypeptide is Putative 5'-nucleotidase alr3139 (Nostoc sp. (strain PCC 7120 / SAG 25.82 / UTEX 2576)).